The primary structure comprises 412 residues: Glucose-1-phosphate adenylyltransferase (412 aa).

Alpha-D-glucose 1-phosphate contacts are provided by residues tyrosine 98, glycine 163, 178–179 (EK), and serine 189.

It belongs to the bacterial/plant glucose-1-phosphate adenylyltransferase family. As to quaternary structure, homotetramer.

It catalyses the reaction alpha-D-glucose 1-phosphate + ATP + H(+) = ADP-alpha-D-glucose + diphosphate. It functions in the pathway glycan biosynthesis; glycogen biosynthesis. In terms of biological role, involved in the biosynthesis of ADP-glucose, a building block required for the elongation reactions to produce glycogen. Catalyzes the reaction between ATP and alpha-D-glucose 1-phosphate (G1P) to produce pyrophosphate and ADP-Glc. This is Glucose-1-phosphate adenylyltransferase from Thermosipho africanus (strain TCF52B).